Here is a 400-residue protein sequence, read N- to C-terminus: Forkhead box protein Q1 (400 aa).

The segment at 1–112 (MKLEVFVPRA…EGARSKPYTR (112 aa)) is disordered. Residues 32–54 (LSAAGDDSLGSDGDCAANSPAAG) are compositionally biased toward low complexity. 2 stretches are compositionally biased toward gly residues: residues 55–66 (SGAGDLEGGGGE) and 95–104 (CAGGVGGGEG). Positions 115-210 (KPPYSYIALI…ADGVFRRRRK (96 aa)) form a DNA-binding region, fork-head. Residues 213-264 (SHRTTVSASGLRPEEAPPGPAGTPQPAPAARSSPIARSPARQEERSSPASKF) form a disordered region. The span at 228–239 (APPGPAGTPQPA) shows a compositional bias: pro residues. Low complexity predominate over residues 240 to 251 (PAARSSPIARSP).

In terms of tissue distribution, expressed in kidney and stomach. Expression in the outer medulla of the kidney and the transitional epithelium. Expressed in the hair follicle medulla.

The protein localises to the nucleus. Its function is as follows. Plays a role in hair follicle differentiation. This Mus musculus (Mouse) protein is Forkhead box protein Q1 (Foxq1).